We begin with the raw amino-acid sequence, 568 residues long: COMPASS component cclA (568 aa).

The interval 1 to 113 (MASDSGTPPP…MRYKLAPPKP (113 aa)) is disordered. Basic and acidic residues-rich tracts occupy residues 68–77 (KESLKKRESK) and 89–98 (PDPKHREPKQ). The region spanning 160 to 353 (ADPGFPSSLY…IPIRFKQHIY (194 aa)) is the B30.2/SPRY domain.

This sequence belongs to the cclA family. Component of the COMPASS complex.

Its subcellular location is the nucleus. It is found in the chromosome. The protein localises to the telomere. Functionally, component of the COMPASS (Set1C) complex that specifically mono-, di- and trimethylates histone H3 to form H3K4me1/2/3, which subsequently plays a role in telomere length maintenance and transcription elongation regulation. Controls the production of several secondary metabolites, including colletochlorins, higginsianins and sclerosporide. Plays a key role in mycelial growth, sporulation, spore germination and virulence. This Colletotrichum higginsianum (strain IMI 349063) (Crucifer anthracnose fungus) protein is COMPASS component cclA.